The primary structure comprises 178 residues: Nicotinamide-nucleotide adenylyltransferase (178 aa).

This sequence belongs to the archaeal NMN adenylyltransferase family.

It is found in the cytoplasm. The catalysed reaction is beta-nicotinamide D-ribonucleotide + ATP + H(+) = diphosphate + NAD(+). Its pathway is cofactor biosynthesis; NAD(+) biosynthesis; NAD(+) from nicotinamide D-ribonucleotide: step 1/1. The sequence is that of Nicotinamide-nucleotide adenylyltransferase from Pyrobaculum neutrophilum (strain DSM 2338 / JCM 9278 / NBRC 100436 / V24Sta) (Thermoproteus neutrophilus).